Consider the following 236-residue polypeptide: Auxin-responsive protein IAA13 (236 aa).

Disordered stretches follow at residues 1–24 (MAGADVDVGTELRLGLPGGGGGAA), 52–93 (EAAA…WPPV), and 105–130 (SVKSKKEEEADKQQQQPAANASGSNS). The EAR-like (transcriptional repression) motif lies at 12-16 (LRLGL). A compositionally biased stretch (low complexity) spans 52–61 (EAAAGKAEAP). Residues 62-81 (AAEKAKRPAEAAAADAEKPP) show a composition bias toward basic and acidic residues. The segment covering 117–130 (QQQQPAANASGSNS) has biased composition (low complexity). The PB1 domain occupies 131-218 (SAFVKVSMDG…SCKRLRIMKG (88 aa)).

This sequence belongs to the Aux/IAA family. In terms of assembly, homodimers and heterodimers.

The protein resides in the nucleus. Its function is as follows. Aux/IAA proteins are short-lived transcriptional factors that function as repressors of early auxin response genes at low auxin concentrations. The sequence is that of Auxin-responsive protein IAA13 (IAA13) from Oryza sativa subsp. japonica (Rice).